The sequence spans 165 residues: Xanthine-guanine phosphoribosyltransferase (165 aa).

Residues 41 to 42 (RG) and 98 to 106 (DDLTDTGKT) each bind 5-phospho-alpha-D-ribose 1-diphosphate. Aspartate 99 is a binding site for Mg(2+). Guanine is bound by residues aspartate 102 and isoleucine 145. Positions 102 and 145 each coordinate xanthine. Residues 102-106 (DTGKT) and 144-145 (WI) contribute to the GMP site.

It belongs to the purine/pyrimidine phosphoribosyltransferase family. XGPT subfamily. As to quaternary structure, homotetramer. The cofactor is Mg(2+).

It is found in the cell inner membrane. It catalyses the reaction GMP + diphosphate = guanine + 5-phospho-alpha-D-ribose 1-diphosphate. The enzyme catalyses XMP + diphosphate = xanthine + 5-phospho-alpha-D-ribose 1-diphosphate. The catalysed reaction is IMP + diphosphate = hypoxanthine + 5-phospho-alpha-D-ribose 1-diphosphate. It participates in purine metabolism; GMP biosynthesis via salvage pathway; GMP from guanine: step 1/1. It functions in the pathway purine metabolism; XMP biosynthesis via salvage pathway; XMP from xanthine: step 1/1. Purine salvage pathway enzyme that catalyzes the transfer of the ribosyl-5-phosphate group from 5-phospho-alpha-D-ribose 1-diphosphate (PRPP) to the N9 position of the 6-oxopurines guanine and xanthine to form the corresponding ribonucleotides GMP (guanosine 5'-monophosphate) and XMP (xanthosine 5'-monophosphate), with the release of PPi. To a lesser extent, also acts on hypoxanthine. This is Xanthine-guanine phosphoribosyltransferase from Sinorhizobium medicae (strain WSM419) (Ensifer medicae).